Reading from the N-terminus, the 76-residue chain is Defensin-like protein 122 (76 aa).

A signal peptide spans 1–25 (MSKTTVIAIFMVVLVLGLVTKETQG). Intrachain disulfides connect Cys-29-Cys-74, Cys-39-Cys-60, Cys-44-Cys-68, and Cys-48-Cys-70.

It belongs to the DEFL family. In terms of tissue distribution, expressed in flower buds, but not in stems, roots or rosette leaves.

The protein resides in the secreted. The polypeptide is Defensin-like protein 122 (LCR30) (Arabidopsis thaliana (Mouse-ear cress)).